A 184-amino-acid polypeptide reads, in one-letter code: Regulatory protein RecX (184 aa).

The tract at residues Met1–Arg21 is disordered.

Belongs to the RecX family.

The protein resides in the cytoplasm. In terms of biological role, modulates RecA activity. The polypeptide is Regulatory protein RecX (Mycolicibacterium vanbaalenii (strain DSM 7251 / JCM 13017 / BCRC 16820 / KCTC 9966 / NRRL B-24157 / PYR-1) (Mycobacterium vanbaalenii)).